The following is a 207-amino-acid chain: Protein GrpE (207 aa).

Residues 1-31 (MSEHQTPPEEDLTVANGDSAEAVSEPDVTVA) are disordered.

It belongs to the GrpE family. As to quaternary structure, homodimer.

The protein localises to the cytoplasm. Participates actively in the response to hyperosmotic and heat shock by preventing the aggregation of stress-denatured proteins, in association with DnaK and GrpE. It is the nucleotide exchange factor for DnaK and may function as a thermosensor. Unfolded proteins bind initially to DnaJ; upon interaction with the DnaJ-bound protein, DnaK hydrolyzes its bound ATP, resulting in the formation of a stable complex. GrpE releases ADP from DnaK; ATP binding to DnaK triggers the release of the substrate protein, thus completing the reaction cycle. Several rounds of ATP-dependent interactions between DnaJ, DnaK and GrpE are required for fully efficient folding. The chain is Protein GrpE from Synechococcus elongatus (strain ATCC 33912 / PCC 7942 / FACHB-805) (Anacystis nidulans R2).